The chain runs to 414 residues: MTQSTSVSKGGRVSRKAKKNPDGTMSIVDHLRELRTRLLRALAAIAVTTIIGFIWYEHGIPAWAIGPLHVPRLPSLGEILKEPYCSLPPSARATFSADNECRLLATSPFEMFMLRMKMGGLAGLVMACPIWLIEIWRFITPGLLKNERRWTLSVGTIAGFLFVLGVVAAYLVLPMGLDVLLHLGDSTQISALTGEKYFNFVIALILVFGLSFEVPLFTAMLNLAGVVHYEQLKDKRRIMIVVIFIFAAIATPGQDPISMLVLALTLVVLMELALQFTRIHDRRAARHVSEWEGLSDDEASPLKVAPSSIPAAESIYDGDHKGIAGGGDAHPAGGSGPIPKPSPVTAPTRAPSASESPTPTPSPAPSDSPTSGSHHAPPAAVLRRGPRSWNDSTGDNDGKPGQDTIQSSSFDDVL.

The interval Met-1–Pro-21 is disordered. 6 helical membrane-spanning segments follow: residues Ile-45–Ile-65, Gly-119–Ile-139, Ile-157–Leu-177, Phe-200–Met-220, Ile-238–Ser-258, and Met-259–Ile-279. A disordered region spans residues Ile-315–Leu-414. The segment covering Ile-323–Gly-336 has biased composition (gly residues). A compositionally biased stretch (low complexity) spans Thr-345 to Pro-357. Over residues Asp-403 to Leu-414 the composition is skewed to polar residues.

The protein belongs to the TatC family. In terms of assembly, the Tat system comprises two distinct complexes: a TatABC complex, containing multiple copies of TatA, TatB and TatC subunits, and a separate TatA complex, containing only TatA subunits. Substrates initially bind to the TatABC complex, which probably triggers association of the separate TatA complex to form the active translocon.

It localises to the cell membrane. Part of the twin-arginine translocation (Tat) system that transports large folded proteins containing a characteristic twin-arginine motif in their signal peptide across membranes. Together with TatB, TatC is part of a receptor directly interacting with Tat signal peptides. The chain is Sec-independent protein translocase protein TatC from Corynebacterium kroppenstedtii (strain DSM 44385 / JCM 11950 / CIP 105744 / CCUG 35717).